A 112-amino-acid polypeptide reads, in one-letter code: Peptidyl-prolyl cis-trans isomerase (112 aa).

The disordered stretch occupies residues 1 to 22 (MGVEKQVISSGNGQDFPKPGDR). In terms of domain architecture, PPIase FKBP-type spans 20–108 (GDRITMHYTG…LFDVELLAIN (89 aa)).

It belongs to the FKBP-type PPIase family. FKBP1 subfamily.

Its subcellular location is the cytoplasm. It is found in the nucleus. The catalysed reaction is [protein]-peptidylproline (omega=180) = [protein]-peptidylproline (omega=0). Its function is as follows. PPIases accelerate the folding of proteins. It catalyzes the cis-trans isomerization of proline imidic peptide bonds in oligopeptides. Has an important role in sexual development and serves as the target for rapamycin action. The sequence is that of Peptidyl-prolyl cis-trans isomerase (fkh1) from Schizosaccharomyces pombe (strain 972 / ATCC 24843) (Fission yeast).